Reading from the N-terminus, the 357-residue chain is Protein pelota homolog (357 aa).

The protein belongs to the eukaryotic release factor 1 family. Pelota subfamily. Monomer. A divalent metal cation is required as a cofactor.

It localises to the cytoplasm. In terms of biological role, may function in recognizing stalled ribosomes, interact with stem-loop structures in stalled mRNA molecules, and effect endonucleolytic cleavage of the mRNA. May play a role in the release non-functional ribosomes and degradation of damaged mRNAs. Has endoribonuclease activity. The chain is Protein pelota homolog from Thermococcus onnurineus (strain NA1).